Reading from the N-terminus, the 274-residue chain is 2-dehydro-3-deoxyphosphooctonate aldolase (274 aa).

It belongs to the KdsA family.

The protein resides in the cytoplasm. The catalysed reaction is D-arabinose 5-phosphate + phosphoenolpyruvate + H2O = 3-deoxy-alpha-D-manno-2-octulosonate-8-phosphate + phosphate. It participates in carbohydrate biosynthesis; 3-deoxy-D-manno-octulosonate biosynthesis; 3-deoxy-D-manno-octulosonate from D-ribulose 5-phosphate: step 2/3. It functions in the pathway bacterial outer membrane biogenesis; lipopolysaccharide biosynthesis. The polypeptide is 2-dehydro-3-deoxyphosphooctonate aldolase (Legionella pneumophila (strain Corby)).